Consider the following 641-residue polypeptide: Chaperone protein DnaK (641 aa).

The residue at position 199 (threonine 199) is a Phosphothreonine; by autocatalysis. Residues 603–627 are disordered; it reads YGQQQAEGGAQAAGAAGGSSKADDA. A compositionally biased stretch (low complexity) spans 604-616; the sequence is GQQQAEGGAQAAG.

Belongs to the heat shock protein 70 family.

Acts as a chaperone. The chain is Chaperone protein DnaK from Azoarcus sp. (strain BH72).